Here is a 428-residue protein sequence, read N- to C-terminus: Probable pectin lyase F (428 aa).

A signal peptide spans 1-20 (MVLLHPLLTAAALLGASARA). A disulfide bridge connects residues Cys83 and Cys107. Arg257 is an active-site residue. An N-linked (GlcNAc...) asparagine glycan is attached at Asn276. Cys324 and Cys332 are oxidised to a cystine. Positions 383–428 (GSGGSGAASSSVSITPSPTSSAIPSSSATPSSSAYARRHYARHHHY) are disordered. Over residues 389 to 417 (AASSSVSITPSPTSSAIPSSSATPSSSAY) the composition is skewed to low complexity. Over residues 418–428 (ARRHYARHHHY) the composition is skewed to basic residues.

It belongs to the polysaccharide lyase 1 family.

The protein resides in the secreted. The catalysed reaction is Eliminative cleavage of (1-&gt;4)-alpha-D-galacturonan methyl ester to give oligosaccharides with 4-deoxy-6-O-methyl-alpha-D-galact-4-enuronosyl groups at their non-reducing ends.. Pectinolytic enzymes consist of four classes of enzymes: pectin lyase, polygalacturonase, pectin methylesterase and rhamnogalacturonase. Among pectinolytic enzymes, pectin lyase is the most important in depolymerization of pectin, since it cleaves internal glycosidic bonds of highly methylated pectins. This Aspergillus oryzae (strain ATCC 42149 / RIB 40) (Yellow koji mold) protein is Probable pectin lyase F (pelF).